Here is a 305-residue protein sequence, read N- to C-terminus: Ribonuclease Z (305 aa).

The Zn(2+) site is built by His-61, His-63, Asp-65, His-66, His-141, Asp-209, and His-268. The Proton acceptor role is filled by Asp-65.

The protein belongs to the RNase Z family. In terms of assembly, homodimer. The cofactor is Zn(2+).

The catalysed reaction is Endonucleolytic cleavage of RNA, removing extra 3' nucleotides from tRNA precursor, generating 3' termini of tRNAs. A 3'-hydroxy group is left at the tRNA terminus and a 5'-phosphoryl group is left at the trailer molecule.. Zinc phosphodiesterase, which displays some tRNA 3'-processing endonuclease activity. Probably involved in tRNA maturation, by removing a 3'-trailer from precursor tRNA. In Clostridioides difficile (strain 630) (Peptoclostridium difficile), this protein is Ribonuclease Z.